The chain runs to 639 residues: Chaperone protein DnaK (639 aa).

At Thr195 the chain carries Phosphothreonine; by autocatalysis. Over residues 601-618 the composition is skewed to low complexity; that stretch reads NAAAGAAPAGEPAPGEPQ. The tract at residues 601–639 is disordered; the sequence is NAAAGAAPAGEPAPGEPQAEQKKDDGVIDAEYVDVDEKK. Residues 627 to 639 show a composition bias toward acidic residues; sequence VIDAEYVDVDEKK.

It belongs to the heat shock protein 70 family.

Functionally, acts as a chaperone. This chain is Chaperone protein DnaK, found in Acidobacterium capsulatum (strain ATCC 51196 / DSM 11244 / BCRC 80197 / JCM 7670 / NBRC 15755 / NCIMB 13165 / 161).